Reading from the N-terminus, the 5058-residue chain is ATP-binding cassette sub-family A member 13 (5058 aa).

The next 7 membrane-spanning stretches (helical) occupy residues 23–43, 3568–3588, 3607–3627, 3648–3668, 3679–3699, 3709–3729, and 3752–3772; these read PVLF…LTVL, VGFF…ASMV, GVHP…VLTI, FIVF…SYLL, ALCT…LLVL, TFLC…ITFL, and FGWV…CGWY. Residues 3842-4074 form the ABC transporter 1 domain; sequence VTLVSVTKEY…YGQGLRLTLT (233 aa). 3875–3882 contributes to the ATP binding site; sequence GTNGAGKT. 7 consecutive transmembrane segments (helical) span residues 4226 to 4246, 4458 to 4478, 4504 to 4524, 4536 to 4556, 4568 to 4588, 4607 to 4627, and 4651 to 4671; these read TLAD…LFMV, VALC…SSVV, FLYD…VIVA, LAAT…WMYL, FISY…ITIM, VLKW…LVEL, and MNFL…LLLL. Residues 4718–4956 enclose the ABC transporter 2 domain; it reads LVLYNLSKHY…FGDGYTVKVW (239 aa). ATP is bound at residue 4754 to 4761; the sequence is GVNGAGKS.

This sequence belongs to the ABC transporter superfamily. As to expression, significantly expressed in the bone marrow, trachea, testis, thyroid and lung as well as in skin fibroblasts.

The protein resides in the cytoplasmic vesicle membrane. It catalyses the reaction cholesterol(in) + ATP + H2O = cholesterol(out) + ADP + phosphate + H(+). May mediate the cholesterol and gangliosides transport from the plasma membrane to intracellular vesicles in an ATP hydrolysis dependent manner, thus playing a role in their internalization by endocytic retrograde transport and may also participate in the endocytosis of synaptic vesicle in cortical neurons. The sequence is that of ATP-binding cassette sub-family A member 13 from Homo sapiens (Human).